Consider the following 545-residue polypeptide: E3 ubiquitin-protein ligase ipaH9.8 (545 aa).

Residues 1-242 form an interaction with target proteins region; the sequence is MLPINNNFSL…YHGPRIYFSM (242 aa). LRR repeat units lie at residues 57 to 77, 78 to 99, 100 to 117, 118 to 139, 140 to 157, 158 to 179, 182 to 203, and 205 to 228; these read NSDE…NLPA, QITL…PVTL, KKLY…VLPP, ALES…PDSL, LTMN…SLPQ, ALKN…SEGN, VVRE…ILNL, and NECS…QRLT. A linker region spans residues 243 to 250; sequence SDGQQNTL. The E3 ubiquitin-protein ligase catalytic domain stretch occupies residues 251-545; sequence HRPLADAVTA…SENGSQLHHS (295 aa). In terms of domain architecture, NEL spans 253-545; it reads PLADAVTAWF…SENGSQLHHS (293 aa). Residue C337 is the Glycyl thioester intermediate of the active site.

The protein belongs to the LRR-containing bacterial E3 ligase family. As to quaternary structure, also interacts with human and mouse U2AF1 (U2AF35). Ubiquitinated in the presence of host E1 ubiquitin-activating enzyme, E2 ubiquitin-conjugating enzyme and ubiquitin.

It localises to the secreted. Its subcellular location is the host cytoplasm. It is found in the host nucleus. It carries out the reaction S-ubiquitinyl-[E2 ubiquitin-conjugating enzyme]-L-cysteine + [acceptor protein]-L-lysine = [E2 ubiquitin-conjugating enzyme]-L-cysteine + N(6)-ubiquitinyl-[acceptor protein]-L-lysine.. With respect to regulation, exists in an autoinhibited state in the absence of substrate protein, due to interactions of the leucine-rich repeats with NEL domain. Is activated upon binding to a substrate protein. Functionally, effector E3 ubiquitin ligase that interferes with host's ubiquitination pathway and modulates the acute inflammatory responses, thus facilitating bacterial colonization within the host cell. Interacts with IKBKG (NEMO) and TNIP1 (ABIN-1), a ubiquitin-binding adapter protein, which results in TNIP1-dependent 'Lys-27'-linked polyubiquitination of IKBKG. Consequently, polyubiquitinated IKBKG undergoes proteasome-dependent degradation, which perturbs NF-kappa-B activation during bacterial infection. Mediates polyubiquitination of host U2AF1, leading to its proteasomal degradation. Catalyzes 'Lys-48'-linked polyubiquitination and subsequent degradation of a subset of host guanylate-binding proteins (GBP1, GBP2, GBP4 and GBP6), thereby suppressing host cell defense. In contrast, host GBP3 and GBP7 are not ubiquitinated by IpaH9.8. Uses UBE2D2 (UBCH5B) as an E2 ubiquitin-conjugating enzyme. The protein is E3 ubiquitin-protein ligase ipaH9.8 (ipaH9.8) of Shigella boydii serotype 18 (strain CDC 3083-94 / BS512).